Reading from the N-terminus, the 955-residue chain is Villin-5 (955 aa).

Gelsolin-like repeat units follow at residues 29 to 111, 152 to 218, 274 to 339, and 644 to 712; these read FKPV…DKFL, VHVK…VEDG, LLHE…TVMF, and HFTQ…GSEP. 2 disordered regions span residues 741–783 and 801–895; these read KGGG…RVRV and NSRN…GLPV. The span at 756–776 shows a compositional bias: polar residues; that stretch reads PTYSGRSTVQDKSQRSRSMSF. The segment covering 817-836 has biased composition (low complexity); it reads PKSATPDSSSAPSKSSATAS. The span at 842-864 shows a compositional bias: basic and acidic residues; sequence DRPKSVKDGSELEKPKQEEDAKE. Over residues 867 to 878 the composition is skewed to polar residues; the sequence is NTMTSRVESLTI. The region spanning 890–955 is the HP domain; that stretch reads DEGLPVYPYD…NRMKIALQLF (66 aa).

Belongs to the villin/gelsolin family.

It is found in the cytoplasm. Its subcellular location is the cytoskeleton. Ca(2+)-regulated actin-binding protein. Binds actin microfilaments (MFs). Involved in actin filament bundling, severing and capping. Caps the barbed end of actin filaments and is able to sever them in a calcium-dependent manner. The sequence is that of Villin-5 from Oryza sativa subsp. japonica (Rice).